The chain runs to 114 residues: Large ribosomal subunit protein bL19 (114 aa).

The protein belongs to the bacterial ribosomal protein bL19 family.

This protein is located at the 30S-50S ribosomal subunit interface and may play a role in the structure and function of the aminoacyl-tRNA binding site. This chain is Large ribosomal subunit protein bL19, found in Clostridium botulinum (strain Loch Maree / Type A3).